A 108-amino-acid chain; its full sequence is MILQRLFRFSSIIRSAVSVHFRRNIGVTAVAFNKELDPVQKLFVDKIREYKSKRQTSGGPVDTGPEYQQELEKELFKLKQMFGKADMNTFPTFKFEDPKFEVIEKPPA.

The N-terminal 32 residues, Met-1–Phe-32, are a transit peptide targeting the mitochondrion. Residues Lys-41, Lys-46, and Lys-79 each carry the N6-acetyllysine modification. N6-acetyllysine; alternate occurs at positions 84, 94, and 99. Lys-84, Lys-94, and Lys-99 each carry N6-succinyllysine; alternate. Lys-105 bears the N6-acetyllysine mark.

It belongs to the eukaryotic ATPase subunit F6 family. Component of the ATP synthase complex composed at least of ATP5F1A/subunit alpha, ATP5F1B/subunit beta, ATP5MC1/subunit c (homooctomer), MT-ATP6/subunit a, MT-ATP8/subunit 8, ATP5ME/subunit e, ATP5MF/subunit f, ATP5MG/subunit g, ATP5MK/subunit k, ATP5MJ/subunit j, ATP5F1C/subunit gamma, ATP5F1D/subunit delta, ATP5F1E/subunit epsilon, ATP5PF/subunit F6, ATP5PB/subunit b, ATP5PD/subunit d, ATP5PO/subunit OSCP. ATP synthase complex consists of a soluble F(1) head domain (subunits alpha(3) and beta(3)) - the catalytic core - and a membrane F(0) domain - the membrane proton channel (subunits c, a, 8, e, f, g, k and j). These two domains are linked by a central stalk (subunits gamma, delta, and epsilon) rotating inside the F1 region and a stationary peripheral stalk (subunits F6, b, d, and OSCP).

The protein resides in the mitochondrion. The protein localises to the mitochondrion inner membrane. In terms of biological role, subunit F6, of the mitochondrial membrane ATP synthase complex (F(1)F(0) ATP synthase or Complex V) that produces ATP from ADP in the presence of a proton gradient across the membrane which is generated by electron transport complexes of the respiratory chain. ATP synthase complex consist of a soluble F(1) head domain - the catalytic core - and a membrane F(1) domain - the membrane proton channel. These two domains are linked by a central stalk rotating inside the F(1) region and a stationary peripheral stalk. During catalysis, ATP synthesis in the catalytic domain of F(1) is coupled via a rotary mechanism of the central stalk subunits to proton translocation. In vivo, can only synthesize ATP although its ATP hydrolase activity can be activated artificially in vitro. Part of the complex F(0) domain. Part of the complex F(0) domain and the peripheric stalk, which acts as a stator to hold the catalytic alpha(3)beta(3) subcomplex and subunit a/ATP6 static relative to the rotary elements. In Macaca fascicularis (Crab-eating macaque), this protein is ATP synthase peripheral stalk subunit F6, mitochondrial.